The primary structure comprises 89 residues: Small ribosomal subunit protein uS15 (89 aa).

The protein belongs to the universal ribosomal protein uS15 family. As to quaternary structure, part of the 30S ribosomal subunit. Forms a bridge to the 50S subunit in the 70S ribosome, contacting the 23S rRNA.

One of the primary rRNA binding proteins, it binds directly to 16S rRNA where it helps nucleate assembly of the platform of the 30S subunit by binding and bridging several RNA helices of the 16S rRNA. In terms of biological role, forms an intersubunit bridge (bridge B4) with the 23S rRNA of the 50S subunit in the ribosome. The polypeptide is Small ribosomal subunit protein uS15 (Vibrio atlanticus (strain LGP32) (Vibrio splendidus (strain Mel32))).